Consider the following 538-residue polypeptide: Phosphoenolpyruvate carboxykinase (ATP) (538 aa).

Positions 64, 206, and 212 each coordinate substrate. ATP contacts are provided by residues Lys212, His231, and 247–255; that span reads GLSGTGKTT. Positions 212 and 231 each coordinate Mn(2+). Residue Asp268 coordinates Mn(2+). Residues Glu296, Arg332, 448-449, and Thr454 contribute to the ATP site; that span reads RI. Position 332 (Arg332) interacts with substrate.

It belongs to the phosphoenolpyruvate carboxykinase (ATP) family. In terms of assembly, monomer. Mn(2+) is required as a cofactor.

Its subcellular location is the cytoplasm. The enzyme catalyses oxaloacetate + ATP = phosphoenolpyruvate + ADP + CO2. Its pathway is carbohydrate biosynthesis; gluconeogenesis. Functionally, involved in the gluconeogenesis. Catalyzes the conversion of oxaloacetate (OAA) to phosphoenolpyruvate (PEP) through direct phosphoryl transfer between the nucleoside triphosphate and OAA. This chain is Phosphoenolpyruvate carboxykinase (ATP), found in Enterobacter sp. (strain 638).